A 2059-amino-acid chain; its full sequence is DNA polymerase theta (2059 aa).

The tract at residues 25–45 (DKENAQPGNGNIQVQSAGNEV) is disordered. Over residues 30–45 (QPGNGNIQVQSAGNEV) the composition is skewed to polar residues. One can recognise a Helicase ATP-binding domain in the interval 243–416 (PRLLFEHCNL…WLDAELYITN (174 aa)). 256-263 (APTSAGKT) serves as a coordination point for ATP. The DEAH box motif lies at 357–360 (DEVH). The Helicase C-terminal domain maps to 464-666 (CIETLLEGCS…HLKRALLEVI (203 aa)). Disordered stretches follow at residues 1052–1073 (PPVK…KNPR), 1168–1190 (PQLA…VNEG), 1204–1274 (QRTQ…SRKV), and 1330–1372 (PHAS…GVSS). A compositionally biased stretch (polar residues) spans 1062-1071 (ENGTANSQKN). Positions 1213–1274 (KDQPIQASRS…NANRTASRKV (62 aa)) are enriched in polar residues. Residues 1355 to 1365 (REIEIDLESKN) show a composition bias toward basic and acidic residues.

Belongs to the DNA polymerase type-A family. It depends on Mg(2+) as a cofactor. In terms of processing, in adult males, cleaved to produce a 100 kDa form. In terms of tissue distribution, expressed in ovaries (at protein level).

The protein resides in the nucleus. It carries out the reaction DNA(n) + a 2'-deoxyribonucleoside 5'-triphosphate = DNA(n+1) + diphosphate. With respect to regulation, resistant to aphidicolin, but sensitive to dideoxythymindine triphosphate (ddTTP) and N-ethyl malemide (NEM). Its function is as follows. Multifunctional protein with both DNA polymerase and ATPase activities. Might have 3' to 5' exonuclease activity. Plays a role in different DNA repair pathways such as DNA strand cross-link repair and microhomology-mediated end-joining (MMEJ), an alternative non-homologous end-joining (NHEJ) machinery triggered in response to double-strand breaks. MMEJ is an error-prone repair pathway that produces deletions of sequences from the strand being repaired and promotes genomic rearrangements, such as telomere fusions. Utilizes short microhomologies present in partially and fully single-stranded DNA (ssDNA) as primers for DNA synthesis. Prefers poly(dA)/oligo(dT) as a template-primer. The ATPase activity is necessary during interstrand cross-link (ICL) repair and has a critical role in generating templated insertions during MMEJ. Necessary for processing DNA damage induced by oxygen and N-ethylation. In follicle cells, contributes to double-strand break repair at physiological rereplication forks necessary for survival of fertilized eggs. This is DNA polymerase theta from Drosophila melanogaster (Fruit fly).